The following is a 254-amino-acid chain: Persulfide dioxygenase ETHE1, mitochondrial (254 aa).

A mitochondrion-targeting transit peptide spans 1–7; that stretch reads MAGSVLK. Ser-14 and Ser-19 each carry phosphoserine. At Lys-32 the chain carries N6-acetyllysine; alternate. The residue at position 32 (Lys-32) is an N6-succinyllysine; alternate. At Lys-66 the chain carries N6-acetyllysine. 3 residues coordinate Fe cation: His-79, His-135, and Asp-154.

It belongs to the metallo-beta-lactamase superfamily. Glyoxalase II family. As to quaternary structure, homodimer. Monomer. Interacts with TST. May interact with RELA. The cofactor is Fe(2+).

The protein localises to the cytoplasm. Its subcellular location is the nucleus. It localises to the mitochondrion matrix. The enzyme catalyses S-sulfanylglutathione + O2 + H2O = sulfite + glutathione + 2 H(+). With respect to regulation, glutathione increases enzyme activity. Its function is as follows. Sulfur dioxygenase that plays an essential role in hydrogen sulfide catabolism in the mitochondrial matrix. Hydrogen sulfide (H(2)S) is first oxidized by SQRDL, giving rise to cysteine persulfide residues. ETHE1 consumes molecular oxygen to catalyze the oxidation of the persulfide, once it has been transferred to a thiophilic acceptor, such as glutathione (R-SSH). Plays an important role in metabolic homeostasis in mitochondria by metabolizing hydrogen sulfide and preventing the accumulation of supraphysiological H(2)S levels that have toxic effects, due to the inhibition of cytochrome c oxidase. First described as a protein that can shuttle between the nucleus and the cytoplasm and suppress p53-induced apoptosis by sequestering the transcription factor RELA/NFKB3 in the cytoplasm and preventing its accumulation in the nucleus. The polypeptide is Persulfide dioxygenase ETHE1, mitochondrial (ETHE1) (Bos taurus (Bovine)).